The chain runs to 332 residues: Ornithine carbamoyltransferase, catabolic (332 aa).

Carbamoyl phosphate-binding positions include 60–63, Q87, R111, and 138–141; these read STRT and HPTQ. L-ornithine is bound by residues N170, D230, and 234-235; that span reads SM. Carbamoyl phosphate-binding positions include 271–272 and R316; that span reads CL.

This sequence belongs to the aspartate/ornithine carbamoyltransferase superfamily. OTCase family.

The protein resides in the cytoplasm. The enzyme catalyses carbamoyl phosphate + L-ornithine = L-citrulline + phosphate + H(+). The protein operates within amino-acid degradation; L-arginine degradation via ADI pathway; carbamoyl phosphate from L-arginine: step 2/2. Functionally, reversibly catalyzes the transfer of the carbamoyl group from carbamoyl phosphate (CP) to the N(epsilon) atom of ornithine (ORN) to produce L-citrulline. This is Ornithine carbamoyltransferase, catabolic from Bacillus thuringiensis subsp. konkukian (strain 97-27).